The primary structure comprises 311 residues: 4-hydroxy-tetrahydrodipicolinate synthase (311 aa).

Thr49 provides a ligand contact to pyruvate. Tyr138 functions as the Proton donor/acceptor in the catalytic mechanism. The active-site Schiff-base intermediate with substrate is the Lys166. Ile207 contributes to the pyruvate binding site.

This sequence belongs to the DapA family. As to quaternary structure, homotetramer; dimer of dimers.

The protein localises to the cytoplasm. It catalyses the reaction L-aspartate 4-semialdehyde + pyruvate = (2S,4S)-4-hydroxy-2,3,4,5-tetrahydrodipicolinate + H2O + H(+). It participates in amino-acid biosynthesis; L-lysine biosynthesis via DAP pathway; (S)-tetrahydrodipicolinate from L-aspartate: step 3/4. Its function is as follows. Catalyzes the condensation of (S)-aspartate-beta-semialdehyde [(S)-ASA] and pyruvate to 4-hydroxy-tetrahydrodipicolinate (HTPA). In Lactobacillus acidophilus (strain ATCC 700396 / NCK56 / N2 / NCFM), this protein is 4-hydroxy-tetrahydrodipicolinate synthase.